Consider the following 636-residue polypeptide: Threonine--tRNA ligase (636 aa).

Positions 1–60 constitute a TGS domain; sequence MPIINFNNKEILFNYPISIIEIIKKFDKNLSENCIAAKINGKLLDVSEIINYDGSLELVK. Positions 242–533 are catalytic; sequence DHRKIGKKLD…ITEEFSGKYP (292 aa). Zn(2+)-binding residues include C333, H384, and H510.

This sequence belongs to the class-II aminoacyl-tRNA synthetase family. As to quaternary structure, homodimer. Zn(2+) is required as a cofactor.

The protein resides in the cytoplasm. The enzyme catalyses tRNA(Thr) + L-threonine + ATP = L-threonyl-tRNA(Thr) + AMP + diphosphate + H(+). Catalyzes the attachment of threonine to tRNA(Thr) in a two-step reaction: L-threonine is first activated by ATP to form Thr-AMP and then transferred to the acceptor end of tRNA(Thr). Also edits incorrectly charged L-seryl-tRNA(Thr). This Wigglesworthia glossinidia brevipalpis protein is Threonine--tRNA ligase.